The primary structure comprises 314 residues: Ribosomal RNA small subunit methyltransferase H (314 aa).

Residues 37–39 (GGH), aspartate 56, phenylalanine 86, aspartate 108, and histidine 115 contribute to the S-adenosyl-L-methionine site.

The protein belongs to the methyltransferase superfamily. RsmH family.

It is found in the cytoplasm. It catalyses the reaction cytidine(1402) in 16S rRNA + S-adenosyl-L-methionine = N(4)-methylcytidine(1402) in 16S rRNA + S-adenosyl-L-homocysteine + H(+). Its function is as follows. Specifically methylates the N4 position of cytidine in position 1402 (C1402) of 16S rRNA. The protein is Ribosomal RNA small subunit methyltransferase H of Leptospira biflexa serovar Patoc (strain Patoc 1 / ATCC 23582 / Paris).